We begin with the raw amino-acid sequence, 29 residues long: Cyclotide mela-3 (29 aa).

A cross-link (cyclopeptide (Gly-Asp)) is located at residues Gly1–Asp29. Cystine bridges form between Cys5-Cys19, Cys9-Cys21, and Cys14-Cys26.

This is a cyclic peptide. In terms of processing, contains 3 disulfide bonds.

Probably participates in a plant defense mechanism (Potential). Binds to and induces leakage in phospholipd membranes, particularly ones containing 1-palmitoyl-2-oleophosphatidylethanolamine (POPE). In vitro, displays cytotoxicity against cultured cells. Not active against Gram-negative bacterium E.coli ATCC 25922 or Gram-positive bacterium S.aureus ATCC 25923 up to a concentration of 64 uM. This is Cyclotide mela-3 from Melicytus latifolius (Norfolk Island mahoe).